An 86-amino-acid chain; its full sequence is Small ribosomal subunit protein bS20 (86 aa).

This sequence belongs to the bacterial ribosomal protein bS20 family.

Its function is as follows. Binds directly to 16S ribosomal RNA. The protein is Small ribosomal subunit protein bS20 of Buchnera aphidicola subsp. Cinara cedri (strain Cc).